The primary structure comprises 462 residues: Cysteine--tRNA ligase (462 aa).

Residue Cys-28 participates in Zn(2+) binding. The 'HIGH' region motif lies at 30-40 (MTVYDYCHIGH). 3 residues coordinate Zn(2+): Cys-209, His-234, and Glu-238. The 'KMSKS' region signature appears at 266 to 270 (KMSKS). Lys-269 contributes to the ATP binding site.

It belongs to the class-I aminoacyl-tRNA synthetase family. Monomer. Zn(2+) serves as cofactor.

The protein localises to the cytoplasm. It catalyses the reaction tRNA(Cys) + L-cysteine + ATP = L-cysteinyl-tRNA(Cys) + AMP + diphosphate. The protein is Cysteine--tRNA ligase of Pseudomonas fluorescens (strain SBW25).